A 636-amino-acid chain; its full sequence is Endoglucanase 4 (636 aa).

A signal peptide spans 1 to 25 (MTRRWSFLVQCFTFKKKEGVRSRYM). Catalysis depends on Asp82, which acts as the Nucleophile. Residues His400, Asp438, and Glu447 contribute to the active site. The CBM3 domain occupies 478-635 (KVEDEFFVEA…GDLVFGTLPN (158 aa)).

The protein belongs to the glycosyl hydrolase 9 (cellulase E) family.

The protein resides in the secreted. The enzyme catalyses Endohydrolysis of (1-&gt;4)-beta-D-glucosidic linkages in cellulose, lichenin and cereal beta-D-glucans.. This is Endoglucanase 4 from Bacillus sp. (strain KSM-522).